The chain runs to 218 residues: Ropporin-1-like protein (218 aa).

The 38-residue stretch at 17 to 54 folds into the RIIa domain; it reads PELPDILKQFTKAAIRTQPADVLQWSAGYFSALSRGDP.

Belongs to the ropporin family. In terms of assembly, component of the axonemal radial spoke complex 1 (RS1), at least composed of spoke head proteins RSPH1, RSPH3, RSPH9 and the cilia-specific component RSPH4A or sperm-specific component RSPH6A, spoke stalk proteins RSPH14, DNAJB13, DYDC1, ROPN1L and NME5, and the anchor protein IQUB. May interact with AKAP3. Interacts with FSCB; the interaction increases upon spermatozoa capacitation conditions. Interacts with CFAP61. In terms of processing, sumoylated, sumoylation decreases upon spermatozoa capacitation conditions. In terms of tissue distribution, testis-specific. Expression is restricted to germ cells.

The protein resides in the cell projection. Its subcellular location is the cilium. It localises to the flagellum. In terms of biological role, functions as part of axonemal radial spoke complexes that play an important part in the motility of sperm and cilia. Important for male fertility. With ROPN1, involved in fibrous sheath integrity and sperm motility, plays a role in PKA-dependent signaling processes required for spermatozoa capacitation. The polypeptide is Ropporin-1-like protein (Ropn1l) (Mus musculus (Mouse)).